A 447-amino-acid polypeptide reads, in one-letter code: Phosphoglucosamine mutase (447 aa).

Catalysis depends on S102, which acts as the Phosphoserine intermediate. 4 residues coordinate Mg(2+): S102, D241, D243, and D245. S102 carries the phosphoserine modification.

The protein belongs to the phosphohexose mutase family. Requires Mg(2+) as cofactor. Post-translationally, activated by phosphorylation.

The catalysed reaction is alpha-D-glucosamine 1-phosphate = D-glucosamine 6-phosphate. In terms of biological role, catalyzes the conversion of glucosamine-6-phosphate to glucosamine-1-phosphate. In Pseudomonas syringae pv. tomato (strain ATCC BAA-871 / DC3000), this protein is Phosphoglucosamine mutase.